Here is a 306-residue protein sequence, read N- to C-terminus: tRNA pseudouridine synthase B (306 aa).

The Nucleophile role is filled by D48.

Belongs to the pseudouridine synthase TruB family. Type 1 subfamily.

The catalysed reaction is uridine(55) in tRNA = pseudouridine(55) in tRNA. Responsible for synthesis of pseudouridine from uracil-55 in the psi GC loop of transfer RNAs. The sequence is that of tRNA pseudouridine synthase B from Haemophilus influenzae (strain 86-028NP).